Here is a 285-residue protein sequence, read N- to C-terminus: MASLRDIKTRINATKKTSQITKAMEMVSTSKLNRAEQNAKSFVPYMEKIQEVVANVALGAGGASHPMLVSRPVKKTGYLVITSDRGLAGAYNSNVLRLVYQTIQKRHASPDEYAIIVIGRVGLSFFRKRNMPVILDITRLPDQPSFADIKEIARKTVGLFADGTFDELYMYYNHYVSAIQQEVTERKLLPLTDLAENKQRTVYEFEPSQEEILDVLLPQYAESLIYGALLDAKASEHAARMTAMKNATDNANELIRTLTLSYNRARQAAITQEITEIVAGANALQ.

The protein belongs to the ATPase gamma chain family. As to quaternary structure, F-type ATPases have 2 components, CF(1) - the catalytic core - and CF(0) - the membrane proton channel. CF(1) has five subunits: alpha(3), beta(3), gamma(1), delta(1), epsilon(1). CF(0) has three main subunits: a, b and c.

Its subcellular location is the cell membrane. In terms of biological role, produces ATP from ADP in the presence of a proton gradient across the membrane. The gamma chain is believed to be important in regulating ATPase activity and the flow of protons through the CF(0) complex. The protein is ATP synthase gamma chain of Geobacillus kaustophilus (strain HTA426).